The following is a 496-amino-acid chain: Probable CtpA-like serine protease (496 aa).

The segment covering 1 to 16 (MDDKQHTSSSDDERAE) has biased composition (basic and acidic residues). Positions 1-27 (MDDKQHTSSSDDERAEIATSNQDQETN) are disordered. Polar residues predominate over residues 18–27 (ATSNQDQETN). Residues 39 to 59 (FISILIGTTLITAVITVVAYI) traverse the membrane as a helical segment. The PDZ domain maps to 124 to 206 (TKSFNEGVSG…TEVTLTVQRG (83 aa)). Active-site charge relay system residues include S329, D340, and K354.

Belongs to the peptidase S41A family.

Its subcellular location is the cell membrane. This chain is Probable CtpA-like serine protease, found in Staphylococcus aureus (strain Mu50 / ATCC 700699).